The following is a 346-amino-acid chain: MEFSAKQIAAFIQGEIIGDENATVHTFAKIEEGMPGAISFLSNPKYTPYIYETQSSIVLVNKDFVPEHEIRATLIKVDNAYESLAKLLNLYEMSKPKKQGIDSLAYIAPSAKIGENVYIGAFAYIGENAVIGDNTQIYPHTFVGDGVKIGNGCLLYSNVNVYHDCRIGNECILHSGAVIGADGFGFAPTPNGYDKIPQIGIVILEDKVDIGANTCVDRATMGATIIHSGAKIDNLVQIAHNDEIGSHTVMAAQVGIAGSAKIGEWCMFGGQVGIAGHITIGDRVNLGAQSGIPSSIKADSVLIGTPPMEPKAYFKAAVVTKNLPDMQKEIRNLRKEVEELKQLLNK.

The active-site Proton acceptor is the histidine 240.

It belongs to the transferase hexapeptide repeat family. LpxD subfamily. As to quaternary structure, homotrimer.

The enzyme catalyses a UDP-3-O-[(3R)-3-hydroxyacyl]-alpha-D-glucosamine + a (3R)-hydroxyacyl-[ACP] = a UDP-2-N,3-O-bis[(3R)-3-hydroxyacyl]-alpha-D-glucosamine + holo-[ACP] + H(+). It functions in the pathway bacterial outer membrane biogenesis; LPS lipid A biosynthesis. Its function is as follows. Catalyzes the N-acylation of UDP-3-O-acylglucosamine using 3-hydroxyacyl-ACP as the acyl donor. Is involved in the biosynthesis of lipid A, a phosphorylated glycolipid that anchors the lipopolysaccharide to the outer membrane of the cell. The protein is UDP-3-O-acylglucosamine N-acyltransferase of Bacteroides thetaiotaomicron (strain ATCC 29148 / DSM 2079 / JCM 5827 / CCUG 10774 / NCTC 10582 / VPI-5482 / E50).